The chain runs to 236 residues: 3-deoxy-D-manno-octulosonic acid kinase (236 aa).

Aspartate 167 is an active-site residue.

It belongs to the protein kinase superfamily. KdkA/RfaP family.

Its subcellular location is the cell inner membrane. The enzyme catalyses an alpha-Kdo-(2-&gt;6)-lipid IVA + ATP = a 4-O-phospho-alpha-Kdo-(2-&gt;6)-lipid IVA + ADP + H(+). It functions in the pathway bacterial outer membrane biogenesis; LPS core biosynthesis. Functionally, catalyzes the ATP-dependent phosphorylation of the 3-deoxy-D-manno-octulosonic acid (Kdo) residue in Kdo-lipid IV(A) at the 4-OH position. This Vibrio vulnificus (strain CMCP6) protein is 3-deoxy-D-manno-octulosonic acid kinase.